Reading from the N-terminus, the 187-residue chain is Elongation factor P (187 aa).

It belongs to the elongation factor P family.

Its subcellular location is the cytoplasm. It functions in the pathway protein biosynthesis; polypeptide chain elongation. In terms of biological role, involved in peptide bond synthesis. Stimulates efficient translation and peptide-bond synthesis on native or reconstituted 70S ribosomes in vitro. Probably functions indirectly by altering the affinity of the ribosome for aminoacyl-tRNA, thus increasing their reactivity as acceptors for peptidyl transferase. This Pseudarthrobacter chlorophenolicus (strain ATCC 700700 / DSM 12829 / CIP 107037 / JCM 12360 / KCTC 9906 / NCIMB 13794 / A6) (Arthrobacter chlorophenolicus) protein is Elongation factor P.